A 212-amino-acid polypeptide reads, in one-letter code: Ribosome maturation factor RimM (212 aa).

In terms of domain architecture, PRC barrel spans 105-181 (EEEFYYADLI…IDSITAGLDN (77 aa)). A disordered region spans residues 181–212 (NAELSGEEDEAEGPESARGSRPRGPKSAGEPR).

Belongs to the RimM family. In terms of assembly, binds ribosomal protein uS19.

It is found in the cytoplasm. An accessory protein needed during the final step in the assembly of 30S ribosomal subunit, possibly for assembly of the head region. Essential for efficient processing of 16S rRNA. May be needed both before and after RbfA during the maturation of 16S rRNA. It has affinity for free ribosomal 30S subunits but not for 70S ribosomes. The protein is Ribosome maturation factor RimM of Chelativorans sp. (strain BNC1).